The following is a 149-amino-acid chain: Large ribosomal subunit protein bL9 (149 aa).

Belongs to the bacterial ribosomal protein bL9 family.

Functionally, binds to the 23S rRNA. This chain is Large ribosomal subunit protein bL9, found in Persephonella marina (strain DSM 14350 / EX-H1).